Here is a 163-residue protein sequence, read N- to C-terminus: 2-C-methyl-D-erythritol 2,4-cyclodiphosphate synthase (163 aa).

Positions 12 and 14 each coordinate a divalent metal cation. 4-CDP-2-C-methyl-D-erythritol 2-phosphate contacts are provided by residues 12–14 (DVH) and 38–39 (HS). Residue His-46 participates in a divalent metal cation binding. Residues 60–62 (DIG), 65–69 (FPDTD), 136–139 (TTTE), Phe-143, and Arg-146 contribute to the 4-CDP-2-C-methyl-D-erythritol 2-phosphate site.

Belongs to the IspF family. Homotrimer. Requires a divalent metal cation as cofactor.

The catalysed reaction is 4-CDP-2-C-methyl-D-erythritol 2-phosphate = 2-C-methyl-D-erythritol 2,4-cyclic diphosphate + CMP. Its pathway is isoprenoid biosynthesis; isopentenyl diphosphate biosynthesis via DXP pathway; isopentenyl diphosphate from 1-deoxy-D-xylulose 5-phosphate: step 4/6. In terms of biological role, involved in the biosynthesis of isopentenyl diphosphate (IPP) and dimethylallyl diphosphate (DMAPP), two major building blocks of isoprenoid compounds. Catalyzes the conversion of 4-diphosphocytidyl-2-C-methyl-D-erythritol 2-phosphate (CDP-ME2P) to 2-C-methyl-D-erythritol 2,4-cyclodiphosphate (ME-CPP) with a corresponding release of cytidine 5-monophosphate (CMP). The protein is 2-C-methyl-D-erythritol 2,4-cyclodiphosphate synthase of Acinetobacter baylyi (strain ATCC 33305 / BD413 / ADP1).